Here is a 680-residue protein sequence, read N- to C-terminus: Extracellular matrix protein 2 (680 aa).

Residues methionine 1 to glycine 20 form the signal peptide. Residues glycine 100–serine 157 enclose the VWFC domain. Residues glutamine 189–lysine 198 show a composition bias toward acidic residues. The tract at residues glutamine 189–glycine 293 is disordered. The span at glutamine 223 to glutamine 238 shows a compositional bias: basic and acidic residues. Acidic residues predominate over residues asparagine 249–glutamate 272. The short motif at arginine 275–aspartate 277 is the Cell attachment site element. The region spanning proline 288–glutamate 325 is the LRRNT domain. LRR repeat units lie at residues asparagine 349 to alanine 369, asparagine 375 to threonine 396, leucine 397 to aspartate 417, glutamine 420 to alanine 440, serine 446 to alanine 466, serine 467 to histidine 488, lysine 491 to alanine 511, asparagine 517 to serine 538, leucine 539 to histidine 559, glycine 563 to serine 583, serine 590 to methionine 611, alanine 613 to asparagine 634, and asparagine 642 to cysteine 665. N-linked (GlcNAc...) asparagine glycosylation is present at asparagine 359. N-linked (GlcNAc...) asparagine glycosylation is present at asparagine 430. Asparagine 487 carries N-linked (GlcNAc...) asparagine glycosylation.

Belongs to the small leucine-rich proteoglycan (SLRP) family. SLRP class I subfamily. Interacts with numerous extracellular matrix proteins. Interacts with MSL1 and RASSF1.

The protein resides in the secreted. It localises to the extracellular space. It is found in the extracellular matrix. Its function is as follows. Promotes matrix assembly and cell adhesiveness. This Bos taurus (Bovine) protein is Extracellular matrix protein 2 (ECM2).